A 636-amino-acid chain; its full sequence is Threonine--tRNA ligase (636 aa).

In terms of domain architecture, TGS spans 1-63 (MINITTSFPN…SKDGSVDPVT (63 aa)). The tract at residues 244–535 (DHRKIAKDLG…LIEHYAGNIP (292 aa)) is catalytic. Zn(2+)-binding residues include Cys335, His386, and His512.

The protein belongs to the class-II aminoacyl-tRNA synthetase family. As to quaternary structure, homodimer. It depends on Zn(2+) as a cofactor.

The protein resides in the cytoplasm. The enzyme catalyses tRNA(Thr) + L-threonine + ATP = L-threonyl-tRNA(Thr) + AMP + diphosphate + H(+). In terms of biological role, catalyzes the attachment of threonine to tRNA(Thr) in a two-step reaction: L-threonine is first activated by ATP to form Thr-AMP and then transferred to the acceptor end of tRNA(Thr). Also edits incorrectly charged L-seryl-tRNA(Thr). The chain is Threonine--tRNA ligase from Anaplasma marginale (strain St. Maries).